The sequence spans 476 residues: Glycogen synthase (476 aa).

ADP-alpha-D-glucose is bound at residue Lys-15.

The protein belongs to the glycosyltransferase 1 family. Bacterial/plant glycogen synthase subfamily.

It catalyses the reaction [(1-&gt;4)-alpha-D-glucosyl](n) + ADP-alpha-D-glucose = [(1-&gt;4)-alpha-D-glucosyl](n+1) + ADP + H(+). It participates in glycan biosynthesis; glycogen biosynthesis. Synthesizes alpha-1,4-glucan chains using ADP-glucose. The sequence is that of Glycogen synthase from Bacillus cereus (strain B4264).